A 526-amino-acid polypeptide reads, in one-letter code: MELKTEEEEVGGVQPVSIQAFASSSTLHGLAHIFSYERLSLKRALWALCFLGSLAVLLCVCTERVQYYFCYHHVTKLDEVAASQLTFPAVTLCNLNEFRFSQVSKNDLYHAGELLALLNNRYEIPDTQMADEKQLEILQDKANFRSFKPKPFNMREFYDRAGHDIRDMLLSCHFRGEACSAEDFKVVFTRYGKCYTFNSGQDGRPRLKTMKGGTGNGLEIMLDIQQDEYLPVWGETDETSFEAGIKVQIHSQDEPPFIDQLGFGVAPGFQTFVSCQEQRLIYLPSPWGTCNAVTMDSDFFDSYSITACRIDCETRYLVENCNCRMVHMPGDAPYCTPEQYKECADPALDFLVEKDQEYCVCEMPCNLTRYGKELSMVKIPSKASAKYLAKKFNKSEQYIGENILVLDIFFEVLNYETIEQKKAYEIAGLLGDIGGQMGLFIGASILTVLELFDYAYEVIKHRLCRRGKCQKEAKRSSADKGVALSLDDVKRHNPCESLRGHPAGMTYAANILPHHPARGTFEDFTC.

The Cytoplasmic portion of the chain corresponds to 1-49 (MELKTEEEEVGGVQPVSIQAFASSSTLHGLAHIFSYERLSLKRALWALC). The helical transmembrane segment at 50 to 66 (FLGSLAVLLCVCTERVQ) threads the bilayer. Residues 67–425 (YYFCYHHVTK…ETIEQKKAYE (359 aa)) lie on the Extracellular side of the membrane. 7 cysteine pairs are disulfide-bonded: Cys-93–Cys-194, Cys-172–Cys-179, Cys-290–Cys-365, Cys-308–Cys-361, Cys-312–Cys-359, Cys-321–Cys-343, and Cys-323–Cys-335. Asn-366 and Asn-393 each carry an N-linked (GlcNAc...) asparagine glycan. The discontinuously helical transmembrane segment at 426-456 (IAGLLGDIGGQMGLFIGASILTVLELFDYAY) threads the bilayer. The GAS motif; ion selectivity filter signature appears at 442–444 (GAS). Residues 457–526 (EVIKHRLCRR…ARGTFEDFTC (70 aa)) lie on the Cytoplasmic side of the membrane. Phosphoserine is present on residues Ser-477 and Ser-497.

It belongs to the amiloride-sensitive sodium channel (TC 1.A.6) family. ASIC1 subfamily. In terms of assembly, homotrimer. Heterotrimer; with other ASIC proteins producing channel with different properties. Interacts with PICK1; regulates ASIC1 clustering in membranes. Interacts with STOM; alters heterotrimeric ASIC channels activity. PH-gating could be regulated by serine proteases. Post-translationally, phosphorylation by PKA regulates interaction with PICK1 and subcellular localization. Phosphorylation by PKC may regulate the channel. As to expression, expressed in dorsal root ganglia and sciatic nerve (at protein level). Widely distributed throughout the brain. Expressed in olfactory bulb, neo and allocortical regions, dentate granule cells, pyramidal cells of CA1-CA3 subfields of the hippocampal formation, habenula, basolateral amygdaloid nuclei, and in the Purkinje and granule cells of the cerebellum. Diffusely detected over most other regions of the basal ganglia, including thalamic nuclei, substantia nigra, striatum and globus pallidus, hypothalamus, midbrain, pons, medulla and choroid plexus. Expressed only in dorsal root ganglion (DRG). In terms of tissue distribution, expressed exclusively in trigeminal ganglion and dorsal root ganglion.

It localises to the cell membrane. The protein localises to the postsynaptic cell membrane. Its subcellular location is the cell projection. The protein resides in the dendrite. It catalyses the reaction Na(+)(in) = Na(+)(out). The enzyme catalyses Li(+)(in) = Li(+)(out). It carries out the reaction K(+)(in) = K(+)(out). The catalysed reaction is Ca(2+)(in) = Ca(2+)(out). It catalyses the reaction H(+)(in) = H(+)(out). Inhibited by the diuretic drug amiloride. External calcium is required to potentiate proton activation of ASIC1 at physiological concentrations, but at higher, non-physiological concentrations, it inhibits activation. Also potentiated by other multivalent cations like Mg(2+), Ba(2+). Activated by FMRFamide-related neuropeptides. Inhibited by anti-inflammatory drugs like salicylic acid. The spider venom psalmotoxin-1 specifically inhibits the ASIC1 homotrimer. The snake venom mambalgin-1, mambalgin-2 and mambalgin-3 inhibit the homotrimer of Asic1a (ASIC1 isoform 1). The snake venom mambalgin-1 and mambalgin-2 inhibit heterotrimers of Asic1a-Asic1b (ASIC1 isoform 1-ASIC1 isoform 3). Heterotrimer of Asic1a-Asic2a is inhibited by the snake venom mambalgin-1, mambalgin-2 and mambalgin-3. Heterotrimer of Asic1a-Asic2b is inhibited by the snake venom mambalgin-1 and mambalgin-2. The spider venom Pi-theraphotoxin-Hm3a inhibits the homotrimer of Asic1a (ASIC1 isoform 1). The spider venom Pi-theraphotoxin-Hm3a inhibits heterotrimers of Asic1a-Asic1b (ASIC1 isoform 1-ASIC1 isoform 3). The spider venom Pi-hexatoxin-Hi1a inhibits the ASIC1 homotrimer. Its activity is regulated as follows. Not inhibited by extracellular calcium. Its function is as follows. Forms voltage-independent, pH-gated trimeric sodium channels that act as postsynaptic excitatory receptors in the nervous system, playing a crucial role in regulating synaptic plasticity, learning, and memory. Upon extracellular pH drop this channel elicits transient, fast activating, and completely desensitizing inward currents. Displays high selectivity for sodium ions but can also permit the permeation of other cations. Regulates more or less directly intracellular calcium concentration and CaMKII phosphorylation, and thereby the density of dendritic spines. Modulates neuronal activity in the circuits underlying innate fear. Permeable to other cations including calcium, lithium and potassium. Functionally, pH activation and steady-state inactivation are shifted to more acidic values. Forms channels that are not permeable to calcium as it discrimates stronger between monovalent cations. In terms of biological role, has no pH-gated sodium channel activity per se but can associate with other ASICs and regulate their pH-sensitivity. This chain is Acid-sensing ion channel 1, found in Rattus norvegicus (Rat).